The chain runs to 310 residues: Isoflavone reductase homolog A622-like (310 aa).

Residues 13–19 (GGTGYIG), arginine 38, and lysine 47 contribute to the NADP(+) site. Lysine 135 serves as the catalytic Proton acceptor. Arginine 139 contributes to the NADP(+) binding site.

The protein belongs to the NmrA-type oxidoreductase family. Isoflavone reductase subfamily. Monomer. Expressed in roots.

The protein localises to the cytoplasm. It participates in alkaloid biosynthesis; nicotine biosynthesis. Its function is as follows. Involved in the biosynthesis of pyridine alkaloid natural products, leading mainly to the production of anabasine, anatabine, nicotine and nornicotine, effective deterrents against herbivores with antiparasitic and pesticide properties (neurotoxins); nornicotine serves as the precursor in the synthesis of the carcinogen compound N'-nitrosonornicotine (NNN). Reductase that may be involved in a late step of tobacco alkaloid biosynthesis. Maybe involved in either the formation of a nicotinic acid-derived precursor or the final condensation reaction of tobacco alkaloids. This is Isoflavone reductase homolog A622-like from Nicotiana tabacum (Common tobacco).